Consider the following 299-residue polypeptide: Protease HtpX homolog (299 aa).

Helical transmembrane passes span 19 to 39 (LFIV…VWYF) and 41 to 61 (WGLT…WIAY). His146 contributes to the Zn(2+) binding site. Residue Glu147 is part of the active site. Position 150 (His150) interacts with Zn(2+). Helical transmembrane passes span 156–176 (ILLM…RDVM) and 198–218 (IILL…VLII). Residue Glu227 participates in Zn(2+) binding.

Belongs to the peptidase M48B family. Requires Zn(2+) as cofactor.

Its subcellular location is the cell membrane. This Thermoanaerobacter pseudethanolicus (strain ATCC 33223 / 39E) (Clostridium thermohydrosulfuricum) protein is Protease HtpX homolog.